Consider the following 883-residue polypeptide: Phosphoenolpyruvate carboxylase (883 aa).

Residues histidine 138 and lysine 546 contribute to the active site.

It belongs to the PEPCase type 1 family. The cofactor is Mg(2+).

It carries out the reaction oxaloacetate + phosphate = phosphoenolpyruvate + hydrogencarbonate. Its function is as follows. Forms oxaloacetate, a four-carbon dicarboxylic acid source for the tricarboxylic acid cycle. In Shigella flexneri, this protein is Phosphoenolpyruvate carboxylase.